Consider the following 204-residue polypeptide: Facilitator of iron transport 3 (204 aa).

The first 18 residues, 1 to 18, serve as a signal peptide directing secretion; that stretch reads MKFSSALVLSAVAATALA. 2 disordered regions span residues 84-104 and 133-175; these read SAAE…SGSS and EGSS…SSTA. Residues 135–175 show a composition bias toward low complexity; sequence SSNTWSPSSTSTSSEAATSSASTTATTTAETSSSATSSSTA. A lipid anchor (GPI-anchor amidated glycine) is attached at glycine 182. Residues 183–204 constitute a propeptide, removed in mature form; that stretch reads AADAITAGTGLMGAALAAVMLL.

The GPI-anchor is attached to the protein in the endoplasmic reticulum and serves to target the protein to the cell surface. There, the glucosamine-inositol phospholipid moiety is cleaved off and the GPI-modified mannoprotein is covalently attached via its lipidless GPI glycan remnant to the 1,6-beta-glucan of the outer cell wall layer.

It is found in the secreted. Its subcellular location is the cell wall. It localises to the membrane. In terms of biological role, involved in the uptake of non-siderophore and siderophore sources of iron. Has a role in the retention of iron in the cell wall and periplasmic space. In Saccharomyces cerevisiae (strain ATCC 204508 / S288c) (Baker's yeast), this protein is Facilitator of iron transport 3 (FIT3).